The sequence spans 78 residues: Probable [Fe-S]-dependent transcriptional repressor (78 aa).

4 residues coordinate iron-sulfur cluster: cysteine 56, cysteine 61, cysteine 64, and cysteine 70.

Belongs to the FeoC family.

Functionally, may function as a transcriptional regulator that controls feoABC expression. The protein is Probable [Fe-S]-dependent transcriptional repressor of Salmonella agona (strain SL483).